Consider the following 1063-residue polypeptide: Structural polyprotein (1063 aa).

A disordered region spans residues 1–131; that stretch reads MASTTPITME…LGPPTNPFQA (131 aa). The human C1QBP/SF2P32-binding stretch occupies residues 30-69; the sequence is GASQSRRPRPPRQRDSSTTGDDSGRDSGGPRRRRGNRGRG. The residue at position 46 (serine 46) is a Phosphoserine; by host. Basic residues predominate over residues 59–69; that stretch reads PRRRRGNRGRG. Residues 70–87 show a composition bias toward basic and acidic residues; that stretch reads QRRDWSRAPPPPEERQET. Residues 93-107 show a composition bias toward pro residues; the sequence is APKPSRAPPQQPQPP. A disulfide bridge connects residues cysteine 153 and cysteine 197. Residues 279-300 are functions as E2 signal peptide; that stretch reads GAPQAFLAGLLLAAVAVGTARA. The Extracellular segment spans residues 301–534; it reads GLQPRADMAA…LWLATANALS (234 aa). 4 N-linked (GlcNAc...) asparagine; by host glycosylation sites follow: asparagine 353, asparagine 371, asparagine 410, and asparagine 429. A helical transmembrane segment spans residues 535 to 555; it reads LDHALAAFVLLVPWVLIFMVC. At 556-582 the chain is on the cytoplasmic side; the sequence is RRTCRRRGAAAALTAVVLQGYNPPAYG. A functions as E1 signal peptide region spans residues 563 to 582; sequence GAAAALTAVVLQGYNPPAYG. The Extracellular portion of the chain corresponds to 583 to 1028; sequence EEAFTYLCTA…QTWAEWAAAH (446 aa). 8 cysteine pairs are disulfide-bonded: cysteine 590–cysteine 595, cysteine 619–cysteine 824, cysteine 641–cysteine 653, cysteine 699–cysteine 712, cysteine 758–cysteine 767, cysteine 807–cysteine 817, cysteine 931–cysteine 934, and cysteine 950–cysteine 983. A glycan (N-linked (GlcNAc...) asparagine; by host) is linked at asparagine 658. Ca(2+)-binding residues include asparagine 670 and alanine 671. Residues aspartate 718 and threonine 719 each contribute to the Ca(2+) site. N-linked (GlcNAc...) asparagine; by host glycans are attached at residues asparagine 759 and asparagine 791. O-linked (GalNAc...) threonine; by host glycosylation is found at threonine 1011 and threonine 1012. A helical membrane pass occupies residues 1029 to 1049; the sequence is WWQLTLGAICALLLAGLLACC. The Extracellular segment spans residues 1050–1063; that stretch reads AKCLYYLRGAIAPR.

In terms of assembly, homodimer; further assembles into homooligomer. Interacts with human C1QBP. Interacts (via N-terminus) with protease/methyltransferase p150. As to quaternary structure, heterodimer with spike glycoprotein E2. Heterodimer with spike glycoprotein E1. Post-translationally, structural polyprotein: Specific enzymatic cleavages in vivo yield mature proteins. Two signal peptidase-mediated cleavages within the polyprotein produce the structural proteins capsid, E2, and E1. The E2 signal peptide remains attached to the C-terminus of the capsid protein after cleavage by the signal peptidase. Another signal peptide at E2 C-terminus directs E1 to the ER, with a similar mechanism. Contains three N-linked oligosaccharides. In terms of processing, capsid is phosphorylated on Ser-46 by host. This phosphorylation negatively regulates capsid protein RNA-binding activity. Dephosphorylated by human PP1A.

It localises to the virion. It is found in the host cytoplasm. Its subcellular location is the host mitochondrion. The protein localises to the virion membrane. The protein resides in the host Golgi apparatus membrane. In terms of biological role, capsid protein interacts with genomic RNA and assembles into icosahedric core particles 65-70 nm in diameter. The resulting nucleocapsid eventually associates with the cytoplasmic domain of E2 at the cell membrane, leading to budding and formation of mature virions from host Golgi membranes. Phosphorylation negatively regulates RNA-binding activity, possibly delaying virion assembly during the viral replication phase. Capsid protein dimerizes and becomes disulfide-linked in the virion. Modulates genomic RNA replication. Modulates subgenomic RNA synthesis by interacting with human C1QBP/SF2P32. Induces both perinuclear clustering of mitochondria and the formation of electron-dense intermitochondrial plaques, both hallmarks of rubella virus infected cells. Induces apoptosis when expressed in transfected cells. Responsible for viral attachment to target host cell, by binding to the cell receptor. Its transport to the plasma membrane depends on interaction with E1 protein. The surface glycoproteins display an irregular helical organization and a pseudo-tetrameric inner nucleocapsid arrangement. Its function is as follows. Class II viral fusion protein. Fusion activity is inactive as long as E1 is bound to E2 in mature virion. After virus attachment to target cell and clathrin-mediated endocytosis, acidification of the endosome would induce dissociation of E1/E2 heterodimer and concomitant trimerization of the E1 subunits. This E1 homotrimer is fusion active, and promotes release of viral nucleocapsid in cytoplasm after endosome and viral membrane fusion. The cytoplasmic tail of spike glycoprotein E1 modulates virus release. The surface glycoproteins display an irregular helical organization and a pseudo-tetrameric inner nucleocapsid arrangement. The chain is Structural polyprotein from Homo sapiens (Human).